Reading from the N-terminus, the 135-residue chain is Succinate dehydrogenase assembly factor 2, mitochondrial (135 aa).

Belongs to the SDHAF2 family. In terms of assembly, interacts with the flavoprotein subunit within the SDH catalytic dimer.

It localises to the mitochondrion matrix. In terms of biological role, plays an essential role in the assembly of succinate dehydrogenase (SDH), an enzyme complex (also referred to as respiratory complex II) that is a component of both the tricarboxylic acid (TCA) cycle and the mitochondrial electron transport chain, and which couples the oxidation of succinate to fumarate with the reduction of ubiquinone (coenzyme Q) to ubiquinol. Required for flavinylation (covalent attachment of FAD) of the flavoprotein subunit of the SDH catalytic dimer. The sequence is that of Succinate dehydrogenase assembly factor 2, mitochondrial from Meyerozyma guilliermondii (strain ATCC 6260 / CBS 566 / DSM 6381 / JCM 1539 / NBRC 10279 / NRRL Y-324) (Yeast).